We begin with the raw amino-acid sequence, 615 residues long: 1-deoxy-D-xylulose-5-phosphate synthase (615 aa).

Thiamine diphosphate-binding positions include His-72 and 113 to 115; that span reads GHA. Mg(2+) is bound at residue Asp-144. Thiamine diphosphate-binding positions include 145-146, Asn-173, Tyr-281, and Glu-360; that span reads GA. Mg(2+) is bound at residue Asn-173.

It belongs to the transketolase family. DXPS subfamily. Homodimer. Mg(2+) is required as a cofactor. It depends on thiamine diphosphate as a cofactor.

The catalysed reaction is D-glyceraldehyde 3-phosphate + pyruvate + H(+) = 1-deoxy-D-xylulose 5-phosphate + CO2. It participates in metabolic intermediate biosynthesis; 1-deoxy-D-xylulose 5-phosphate biosynthesis; 1-deoxy-D-xylulose 5-phosphate from D-glyceraldehyde 3-phosphate and pyruvate: step 1/1. Catalyzes the acyloin condensation reaction between C atoms 2 and 3 of pyruvate and glyceraldehyde 3-phosphate to yield 1-deoxy-D-xylulose-5-phosphate (DXP). In Thermus thermophilus (strain ATCC 27634 / DSM 579 / HB8), this protein is 1-deoxy-D-xylulose-5-phosphate synthase.